Here is an 869-residue protein sequence, read N- to C-terminus: Speckle targeted PIP5K1A-regulated poly(A) polymerase (869 aa).

A Matrin-type zinc finger spans residues 16-46 (FRCCLCHVTTANRPSLDAHLGGRKHRHLVEL). An RRM domain is found at 56–128 (RSVFVSGFPR…HRLRVRPREQ (73 aa)). Positions 111–147 (QPQHTLGGHRLRVRPREQKEFQSPASKSPKGAAPDSH) are disordered. S205 contacts ATP. 2 residues coordinate Mg(2+): D216 and D218. UTP is bound by residues D216 and D218. Positions 252 to 315 (QALACTPASP…PASPLQEDRG (64 aa)) are disordered. Residues 259–269 (ASPPDSQPPSP) show a composition bias toward pro residues. Polar residues predominate over residues 279–290 (TPSSSLAPQTPD). N391 lines the ATP pocket. 4 residues coordinate UTP: N391, R413, Y431, and H548. Residues 490 to 548 (LSSLLAQFFSCVSCWDLRGSLLSLREGQALPVAGDLPSNRWEGLRLGPMNLQDPFDLSH) form the PAP-associated domain. Residues 597 to 869 (SSPSSLLSAT…VFLPQALRNL (273 aa)) are KA1; binds the bulging loops of U6 snRNA but is dispensable for terminal uridylyltransferase activity. Composition is skewed to basic and acidic residues over residues 637 to 648 (GTKRLRSDRGGP) and 660 to 686 (LKLD…HSED). 2 disordered regions span residues 637 to 686 (GTKR…HSED) and 720 to 755 (LATG…TGRG). Phosphoserine occurs at positions 684 and 748.

Belongs to the DNA polymerase type-B-like family. Associates with the cleavage and polyadenylation specificity factor (CPSF) complex. Interacts with CPSF1 and CPSF3; the interaction is direct. Interacts with PIP5K1A. The cofactor is Mg(2+). Requires Mn(2+) as cofactor. In terms of processing, phosphorylated by CK1 in the proline-rich (Pro-rich) region.

The protein localises to the nucleus. It is found in the nucleolus. The protein resides in the nucleus speckle. It catalyses the reaction RNA(n) + UTP = RNA(n)-3'-uridine ribonucleotide + diphosphate. The catalysed reaction is RNA(n) + ATP = RNA(n)-3'-adenine ribonucleotide + diphosphate. Its activity is regulated as follows. Adenylyltransferase activity is specifically phosphatidylinositol 4,5-bisphosphate (PtdIns(4,5)P2). Poly(A) polymerase that creates the 3'-poly(A) tail of specific pre-mRNAs. Localizes to nuclear speckles together with PIP5K1A and mediates polyadenylation of a select set of mRNAs, such as HMOX1. In addition to polyadenylation, it is also required for the 3'-end cleavage of pre-mRNAs: binds to the 3'UTR of targeted pre-mRNAs and promotes the recruitment and assembly of the CPSF complex on the 3'UTR of pre-mRNAs. In addition to adenylyltransferase activity, also has uridylyltransferase activity. However, the ATP ratio is higher than UTP in cells, suggesting that it functions primarily as a poly(A) polymerase. Acts as a specific terminal uridylyltransferase for U6 snRNA in vitro: responsible for a controlled elongation reaction that results in the restoration of the four 3'-terminal UMP-residues found in newly transcribed U6 snRNA. Not involved in replication-dependent histone mRNA degradation. The chain is Speckle targeted PIP5K1A-regulated poly(A) polymerase (TUT1) from Ailuropoda melanoleuca (Giant panda).